A 410-amino-acid chain; its full sequence is Exopolygalacturonase (410 aa).

Positions 1-22 (MACTNNAMRALFLLVLFCIVHG) are cleaved as a signal peptide. A glycan (N-linked (GlcNAc...) asparagine) is linked at Asn89. PbH1 repeat units follow at residues 192-218 (CKDM…HMGD), 219-240 (SSGI…SIGP), 242-262 (TSKV…SIGS), 272-293 (VTDI…RIKA), and 337-377 (ASKV…TMDD). Catalysis depends on Asp233, which acts as the Proton donor. An intrachain disulfide couples Cys235 to Cys252. An N-linked (GlcNAc...) asparagine glycan is attached at Asn246. His256 is a catalytic residue. Residue Asn349 is glycosylated (N-linked (GlcNAc...) asparagine). Residues Cys364 and Cys370 are joined by a disulfide bond. Asn387 is a glycosylation site (N-linked (GlcNAc...) asparagine). The cysteines at positions 393 and 409 are disulfide-linked.

It belongs to the glycosyl hydrolase 28 family. In terms of tissue distribution, pollen.

It localises to the secreted. It is found in the cell wall. The catalysed reaction is [(1-&gt;4)-alpha-D-galacturonosyl](n) + H2O = alpha-D-galacturonate + [(1-&gt;4)-alpha-D-galacturonosyl](n-1). In terms of biological role, may function in depolymerizing pectin during pollen development, germination, and tube growth. Acts as an exo-polygalacturonase. The sequence is that of Exopolygalacturonase (PG1) from Zea mays (Maize).